Reading from the N-terminus, the 1058-residue chain is Carbamoyl phosphate synthase large chain (1058 aa).

Positions M1–E401 are carboxyphosphate synthetic domain. ATP-binding residues include R129, R169, G175, G176, R208, I210, E215, G241, I242, H243, Q284, and E298. Positions K133–V327 constitute an ATP-grasp 1 domain. The Mg(2+) site is built by Q284, E298, and N300. Mn(2+)-binding residues include Q284, E298, and N300. The segment at I402–S546 is oligomerization domain. A carbamoyl phosphate synthetic domain region spans residues I547–Y929. Positions E671–L861 constitute an ATP-grasp 2 domain. 10 residues coordinate ATP: R707, S746, I748, E752, G777, V778, H779, S780, Q820, and E832. Mg(2+) contacts are provided by Q820, E832, and N834. Mn(2+) is bound by residues Q820, E832, and N834. The 129-residue stretch at L930–I1058 folds into the MGS-like domain. The tract at residues L930–I1058 is allosteric domain.

It belongs to the CarB family. In terms of assembly, composed of two chains; the small (or glutamine) chain promotes the hydrolysis of glutamine to ammonia, which is used by the large (or ammonia) chain to synthesize carbamoyl phosphate. Tetramer of heterodimers (alpha,beta)4. Mg(2+) is required as a cofactor. It depends on Mn(2+) as a cofactor.

It carries out the reaction hydrogencarbonate + L-glutamine + 2 ATP + H2O = carbamoyl phosphate + L-glutamate + 2 ADP + phosphate + 2 H(+). The enzyme catalyses hydrogencarbonate + NH4(+) + 2 ATP = carbamoyl phosphate + 2 ADP + phosphate + 2 H(+). Its pathway is amino-acid biosynthesis; L-arginine biosynthesis; carbamoyl phosphate from bicarbonate: step 1/1. It functions in the pathway pyrimidine metabolism; UMP biosynthesis via de novo pathway; (S)-dihydroorotate from bicarbonate: step 1/3. In terms of biological role, large subunit of the glutamine-dependent carbamoyl phosphate synthetase (CPSase). CPSase catalyzes the formation of carbamoyl phosphate from the ammonia moiety of glutamine, carbonate, and phosphate donated by ATP, constituting the first step of 2 biosynthetic pathways, one leading to arginine and/or urea and the other to pyrimidine nucleotides. The large subunit (synthetase) binds the substrates ammonia (free or transferred from glutamine from the small subunit), hydrogencarbonate and ATP and carries out an ATP-coupled ligase reaction, activating hydrogencarbonate by forming carboxy phosphate which reacts with ammonia to form carbamoyl phosphate. This is Carbamoyl phosphate synthase large chain from Streptococcus pneumoniae (strain ATCC 700669 / Spain 23F-1).